A 526-amino-acid polypeptide reads, in one-letter code: Chaperonin GroEL, chloroplastic (526 aa).

Residues 29–32, 86–90, Gly-412, 476–478, and Asp-492 each bind ATP; these read TLGP, DGTTT, and DAA.

Belongs to the chaperonin (HSP60) family. As to quaternary structure, forms a cylinder of 14 subunits composed of two heptameric rings stacked back-to-back. Interacts with the co-chaperonin GroES.

It is found in the plastid. It localises to the chloroplast. The catalysed reaction is ATP + H2O + a folded polypeptide = ADP + phosphate + an unfolded polypeptide.. In terms of biological role, together with its co-chaperonin GroES, plays an essential role in assisting protein folding. The GroEL-GroES system forms a nano-cage that allows encapsulation of the non-native substrate proteins and provides a physical environment optimized to promote and accelerate protein folding. This is Chaperonin GroEL, chloroplastic from Cyanidioschyzon merolae (strain NIES-3377 / 10D) (Unicellular red alga).